The chain runs to 184 residues: NADH-quinone oxidoreductase subunit B (184 aa).

[4Fe-4S] cluster contacts are provided by Cys37, Cys38, Cys103, and Cys132.

Belongs to the complex I 20 kDa subunit family. In terms of assembly, NDH-1 is composed of 14 different subunits. Subunits NuoB, C, D, E, F, and G constitute the peripheral sector of the complex. [4Fe-4S] cluster serves as cofactor.

It is found in the cell membrane. It catalyses the reaction a quinone + NADH + 5 H(+)(in) = a quinol + NAD(+) + 4 H(+)(out). Its function is as follows. NDH-1 shuttles electrons from NADH, via FMN and iron-sulfur (Fe-S) centers, to quinones in the respiratory chain. The immediate electron acceptor for the enzyme in this species is believed to be a menaquinone. Couples the redox reaction to proton translocation (for every two electrons transferred, four hydrogen ions are translocated across the cytoplasmic membrane), and thus conserves the redox energy in a proton gradient. This is NADH-quinone oxidoreductase subunit B from Mycolicibacterium paratuberculosis (strain ATCC BAA-968 / K-10) (Mycobacterium paratuberculosis).